Reading from the N-terminus, the 599-residue chain is MTTPAPLTGLLPLNPEQLARLQAATTDLTPEQLAWVSGFFWGVLNPRSGAVAVTPAPDGKMPGVTLISASQTGNARRVAEALRDDLLAANLNVTLVNAGDYKFKQIASEKLLVIVTSTQGEGEPPEEAVALHKFLFSKKAPKLENTAFAVFSLGDTSYEFFCQSGKDFDSKLAELGGERLLDRVDADVEYQAAASEWRACVVDVLKSRAPVAVPSQSVATGAVNDIHTSPYTKDAPLTATLSVNQKITGRNSEKDVRHIEIDLGDSGLRYQPGDALGVWYQNDPALVKELVELLWLKGDEPVMVDGKTLPLAEALEWHFELTVNTANIVENYATLTRSESLLPLVGDKAQLQHYAATTPIVDMVRFSPAQLDAQALIDLLRPLTPRLYSIASAQAEVESEVHITVGVVRYDIEGRARAGGASSFLADRVEEEGEVRVFIEHNDNFRLPANPQTPVIMIGPGTGIAPFRAFMQQRAADGAEGKNWLFFGNPHFTEDFLYQVEWQRYVKEGLLSRIDLAWSRDQKEKIYVQDKLREQGAELWRWINDGAHIYVCGDARRMAADVEKALLEVIAEFGGMDLESADEYLSELRVERRYQRDVY.

In terms of domain architecture, Flavodoxin-like spans Val64–Val202. FMN contacts are provided by residues Ser70 to Ala75, Ser117 to Gly120, and Leu153 to Cys162. One can recognise an FAD-binding FR-type domain in the interval Asp234–Pro448. FAD contacts are provided by residues Thr322, Ala356, Arg386 to Ser389, Thr404 to Gly406, Tyr410, and Gly419 to Ser422. NADP(+) is bound by residues Ser519–Arg520, Lys525–Gln529, and Asp561. Tyr599 provides a ligand contact to FAD.

Belongs to the NADPH-dependent sulphite reductase flavoprotein subunit CysJ family. It in the N-terminal section; belongs to the flavodoxin family. The protein in the C-terminal section; belongs to the flavoprotein pyridine nucleotide cytochrome reductase family. Alpha(8)-beta(8). The alpha component is a flavoprotein, the beta component is a hemoprotein. It depends on FAD as a cofactor. FMN serves as cofactor.

The catalysed reaction is hydrogen sulfide + 3 NADP(+) + 3 H2O = sulfite + 3 NADPH + 4 H(+). The protein operates within sulfur metabolism; hydrogen sulfide biosynthesis; hydrogen sulfide from sulfite (NADPH route): step 1/1. Its function is as follows. Component of the sulfite reductase complex that catalyzes the 6-electron reduction of sulfite to sulfide. This is one of several activities required for the biosynthesis of L-cysteine from sulfate. The flavoprotein component catalyzes the electron flow from NADPH -&gt; FAD -&gt; FMN to the hemoprotein component. This is Sulfite reductase [NADPH] flavoprotein alpha-component from Salmonella typhi.